The sequence spans 226 residues: TPD1 protein homolog 1A (226 aa).

An N-terminal signal peptide occupies residues 1–35; the sequence is MRVSSASSTPPPPAFAAAAWAVVLLAMLRSDVALA.

As to quaternary structure, interacts with MSP1. In terms of tissue distribution, expressed in roots, and anthers and ovules during meiosis.

In terms of biological role, involved in cell specification during anther development. Required for the differentiation of primary parietal cells into secondary parietal cells in anthers. May serve as an extracellular ligand for the MSP1 receptor kinase to limit sporocyte number in ovules. This Oryza sativa subsp. japonica (Rice) protein is TPD1 protein homolog 1A.